The sequence spans 216 residues: UDP-N-acetylbacillosamine N-acetyltransferase (216 aa).

Catalysis depends on histidine 137, which acts as the Proton acceptor. Position 146 (histidine 146) interacts with acetyl-CoA.

The protein belongs to the transferase hexapeptide repeat family. Forms oligomers.

It catalyses the reaction UDP-N-acetylbacillosamine + acetyl-CoA = UDP-N,N'-diacetylbacillosamine + CoA + H(+). Its function is as follows. Catalyzes the conversion of UDP-2,4,6-trideoxy-2-acetamido-4-amino glucose to UDP-2,4,6-trideoxy-2,4-diacetamido glucose, commonly known as UDP-N,N'-diacetylbacillosamine (UDP-diNAcBac). The chain is UDP-N-acetylbacillosamine N-acetyltransferase from Bacillus subtilis (strain 168).